Here is a 216-residue protein sequence, read N- to C-terminus: Probable GTP-binding protein EngB (216 aa).

One can recognise an EngB-type G domain in the interval 26 to 200 (EGIEIAFAGR…RAKLDTWFAP (175 aa)). GTP is bound by residues 34-41 (GRSNAGKS), 61-65 (GRTQL), 79-82 (DLPG), 146-149 (TKAD), and 179-181 (YSS). Residues Ser-41 and Thr-63 each coordinate Mg(2+).

Belongs to the TRAFAC class TrmE-Era-EngA-EngB-Septin-like GTPase superfamily. EngB GTPase family. It depends on Mg(2+) as a cofactor.

Necessary for normal cell division and for the maintenance of normal septation. In Vibrio vulnificus (strain CMCP6), this protein is Probable GTP-binding protein EngB.